Consider the following 379-residue polypeptide: MATDYYAVLGVRRDASQDEIKKAFRRLARELHPDVNPDPKTQERFKEINAAYEVLSDPQKKQVYDLGGDPLSQNGGGGAGGFGQGGFGNFSDIMDAFFGTASQRGPRSRTRRGQDAMIRLDIELDEAAFGTTKDIQVDTAVVCNTCNGEGAAPGTSAQTCDMCRGRGEVSQVTRSFLGQVMTSRPCPQCQGFATVVPTPCPECAGDGRVPSRRTLTVKIPAGVDNGTRIQLAGEGEVGPGGGPGGDLYVEIHELPHSVFQRRGDDLHCTVTIPMTGPRPSAPRCLETLDGMEEIDIRPGTQSGQSVPLHGRGITHLRGGGGRDLIVHVEVTTPGKLDAEQEHLLRELAKLRGEERPTGQFQPGQQGLFSRLKDAFNGRS.

Residues 4 to 68 form the J domain; sequence DYYAVLGVRR…QKKQVYDLGG (65 aa). The CR-type zinc-finger motif lies at 130 to 212; that stretch reads GTTKDIQVDT…CAGDGRVPSR (83 aa). Zn(2+) contacts are provided by cysteine 143, cysteine 146, cysteine 160, cysteine 163, cysteine 186, cysteine 189, cysteine 200, and cysteine 203. CXXCXGXG motif repeat units follow at residues 143–150, 160–167, 186–193, and 200–207; these read CNTCNGEG, CDMCRGRG, CPQCQGFA, and CPECAGDG. Positions 351–379 are disordered; the sequence is RGEERPTGQFQPGQQGLFSRLKDAFNGRS. The segment covering 358 to 367 has biased composition (polar residues); that stretch reads GQFQPGQQGL. Over residues 370-379 the composition is skewed to basic and acidic residues; sequence RLKDAFNGRS.

Belongs to the DnaJ family. As to quaternary structure, homodimer. Requires Zn(2+) as cofactor.

Its subcellular location is the cytoplasm. Its function is as follows. Participates actively in the response to hyperosmotic and heat shock by preventing the aggregation of stress-denatured proteins and by disaggregating proteins, also in an autonomous, DnaK-independent fashion. Unfolded proteins bind initially to DnaJ; upon interaction with the DnaJ-bound protein, DnaK hydrolyzes its bound ATP, resulting in the formation of a stable complex. GrpE releases ADP from DnaK; ATP binding to DnaK triggers the release of the substrate protein, thus completing the reaction cycle. Several rounds of ATP-dependent interactions between DnaJ, DnaK and GrpE are required for fully efficient folding. Also involved, together with DnaK and GrpE, in the DNA replication of plasmids through activation of initiation proteins. This Streptomyces albus G protein is Chaperone protein DnaJ 2.